Consider the following 359-residue polypeptide: UDP-3-O-acylglucosamine N-acyltransferase (359 aa).

H253 (proton acceptor) is an active-site residue.

This sequence belongs to the transferase hexapeptide repeat family. LpxD subfamily. Homotrimer.

The enzyme catalyses a UDP-3-O-[(3R)-3-hydroxyacyl]-alpha-D-glucosamine + a (3R)-hydroxyacyl-[ACP] = a UDP-2-N,3-O-bis[(3R)-3-hydroxyacyl]-alpha-D-glucosamine + holo-[ACP] + H(+). It participates in bacterial outer membrane biogenesis; LPS lipid A biosynthesis. Its function is as follows. Catalyzes the N-acylation of UDP-3-O-acylglucosamine using 3-hydroxyacyl-ACP as the acyl donor. Is involved in the biosynthesis of lipid A, a phosphorylated glycolipid that anchors the lipopolysaccharide to the outer membrane of the cell. The sequence is that of UDP-3-O-acylglucosamine N-acyltransferase from Burkholderia cenocepacia (strain ATCC BAA-245 / DSM 16553 / LMG 16656 / NCTC 13227 / J2315 / CF5610) (Burkholderia cepacia (strain J2315)).